The sequence spans 374 residues: All-trans-retinol dehydrogenase [NAD(+)] ADH7 (374 aa).

Residues Cys47, His68, Cys98, Cys101, Cys104, Cys112, and Cys174 each coordinate Zn(2+). Residues 199-204, Asp223, Lys228, 292-294, and Arg369 contribute to the NAD(+) site; these read GLGGVG and VGA.

This sequence belongs to the zinc-containing alcohol dehydrogenase family. Class-IV subfamily. As to quaternary structure, homodimer. Zn(2+) serves as cofactor. As to expression, high expression in the stomach mucosa. Lower expression in eye, thymus, skin and ovary. Very low expression in small intestine, liver and uterus.

It is found in the cytoplasm. It catalyses the reaction a primary alcohol + NAD(+) = an aldehyde + NADH + H(+). The enzyme catalyses 10-hydroxydecanoate + NAD(+) = 10-oxodecanoate + NADH + H(+). The catalysed reaction is all-trans-retinol + NAD(+) = all-trans-retinal + NADH + H(+). It carries out the reaction 9-cis-retinol + NAD(+) = 9-cis-retinal + NADH + H(+). It catalyses the reaction all-trans-3,4-didehydroretinol + NAD(+) = all-trans-3,4-didehydroretinal + NADH + H(+). The enzyme catalyses all-trans-4-hydroxyretinol + NAD(+) = all-trans-4-hydroxyretinal + NADH + H(+). The catalysed reaction is all-trans-4-oxoretinol + NAD(+) = all-trans-4-oxoretinal + NADH + H(+). It carries out the reaction 12-hydroxydodecanoate + NAD(+) = 12-oxododecanoate + NADH + H(+). It catalyses the reaction 16-hydroxyhexadecanoate + NAD(+) = 16-oxohexadecanoate + NADH + H(+). The enzyme catalyses hexan-1-ol + NAD(+) = hexanal + NADH + H(+). The catalysed reaction is (E)-hex-2-en-1-ol + NAD(+) = (E)-hex-2-enal + NADH + H(+). It carries out the reaction (E)-4-hydroxynon-2-en-1-ol + NAD(+) = (E)-4-hydroxynon-2-enal + NADH + H(+). With respect to regulation, retinol oxidation is inhibited by the detergent Tween 80. Ethanol inhibits both all-trans-retinol and 9-cis-retinol oxidation. 13-cis-retinol is an effective competitive inhibitor of the 9-cis-retinol oxidation. All-trans-retinoic acid is a powerful inhibitor of all-trans-retinol oxidation. 13-cis-retinoic acid is a powerful inhibitor of all-trans-retinol oxidation. Cimetidine competitively inhibited ethanol oxidation. Its function is as follows. Catalyzes the NAD-dependent oxidation of all-trans-retinol, alcohol, aldehyde and omega-hydroxy fatty acids and their derivatives. Oxidizes preferentially all trans-retinol, all-trans-4-hydroxyretinol, 9-cis-retinol, 2-hexenol, and long chain omega-hydroxy fatty acids such as juniperic acid. In vitro can also catalyze the NADH-dependent reduction of all-trans-retinal and aldehydes and their derivatives. Reduces preferentially all trans-retinal, all-trans-4-oxoretinal and hexanal. Catalyzes in the oxidative direction with higher efficiency. Therefore may participate in retinoid metabolism, fatty acid omega-oxidation, and elimination of cytotoxic aldehydes produced by lipid peroxidation. The protein is All-trans-retinol dehydrogenase [NAD(+)] ADH7 (Adh7) of Mus musculus (Mouse).